The sequence spans 182 residues: Adenine phosphoribosyltransferase (182 aa).

The protein belongs to the purine/pyrimidine phosphoribosyltransferase family. As to quaternary structure, homodimer.

It is found in the cytoplasm. The enzyme catalyses AMP + diphosphate = 5-phospho-alpha-D-ribose 1-diphosphate + adenine. It participates in purine metabolism; AMP biosynthesis via salvage pathway; AMP from adenine: step 1/1. Functionally, catalyzes a salvage reaction resulting in the formation of AMP, that is energically less costly than de novo synthesis. This Pseudomonas putida (strain GB-1) protein is Adenine phosphoribosyltransferase.